We begin with the raw amino-acid sequence, 237 residues long: Sugar fermentation stimulation protein homolog (237 aa).

Belongs to the SfsA family.

The polypeptide is Sugar fermentation stimulation protein homolog (Actinobacillus pleuropneumoniae serotype 3 (strain JL03)).